A 429-amino-acid chain; its full sequence is MTEIINVTAREILDSRGNPTVEVEVAVGTGDVGRAAVPSGASTGEHEALELRDGDKARYLGKGVRKAVANVIDEIAPAVVGLDASDQAALDARMIALDGTPTKSKLGANAILGVSLAAAKAAATAHGLPLYRYVGGAGARTLPVPLMNILNGGAHADSNVDIQEFMVVPLGLPTFAEALRCGAEIFHALKKVLKGKGAATGVGDEGGYAPSLASNEEALAVIMEAIGQAGYEPGKQVALALDCAASEFYDKKAGKYELEGEGKSFDGKGLVEYYAQLAAKYPIVSIEDGCDEDDWATWKLLTERLGGKLQLVGDDLFVTNVTRLARGIEQGVTNSILVKVNQIGSLTETLEAVRMAHRAGYTTVMSHRSGETEDTTIADLAVACDCGQIKTGSASRTDRIAKYNQLLRIEEELGTSGRYAGRSAFKALR.

Gln163 contributes to the (2R)-2-phosphoglycerate binding site. The active-site Proton donor is Glu205. Residues Asp242, Glu287, and Asp314 each coordinate Mg(2+). (2R)-2-phosphoglycerate contacts are provided by Lys339, Arg368, Ser369, and Lys390. The active-site Proton acceptor is Lys339.

This sequence belongs to the enolase family. It depends on Mg(2+) as a cofactor.

Its subcellular location is the cytoplasm. It is found in the secreted. The protein localises to the cell surface. It catalyses the reaction (2R)-2-phosphoglycerate = phosphoenolpyruvate + H2O. It participates in carbohydrate degradation; glycolysis; pyruvate from D-glyceraldehyde 3-phosphate: step 4/5. Functionally, catalyzes the reversible conversion of 2-phosphoglycerate (2-PG) into phosphoenolpyruvate (PEP). It is essential for the degradation of carbohydrates via glycolysis. This is Enolase from Anaeromyxobacter dehalogenans (strain 2CP-C).